Consider the following 415-residue polypeptide: MDYIQEYVKPVDPEVAEAIEKEEARQNNKLELIASENFVSRAVMAAQGSVMTNKYAEGLPGARYYGGCEYVDIVEELARDRVKEIFGAEHANVQPHSGAQANTAVYFAALQPGQTIMGMNLNHGGHLTHGSKVNISGKYFNIVDYGVNRDTERIDYEELREIALKARPQMIVAGASAYPRILDFKKFREIADEAGALLFVDMAHIAGLVAAGLHPSPVPYADFVSSTTHKTLRGPRGGFILCRQEWANKIDKAVFPGIQGGPLMHVIAAKAVCFKEALTPEFKAYQQDIVNNAAILAKALMEQGLRVVSGGTDNHLMLVDVRPKGLNGRDAEAILESINITVNKNAIPFDPEKPTVTSGIRVGTPAVTSRALKGDDMRELARAITLVLDKHDSEEVKEEARRIVKALCDKYPLYT.

Residues L121 and 125-127 each bind (6S)-5,6,7,8-tetrahydrofolate; that span reads GHL. K230 carries the N6-(pyridoxal phosphate)lysine modification.

It belongs to the SHMT family. In terms of assembly, homodimer. Pyridoxal 5'-phosphate serves as cofactor.

It is found in the cytoplasm. The enzyme catalyses (6R)-5,10-methylene-5,6,7,8-tetrahydrofolate + glycine + H2O = (6S)-5,6,7,8-tetrahydrofolate + L-serine. It functions in the pathway one-carbon metabolism; tetrahydrofolate interconversion. Its pathway is amino-acid biosynthesis; glycine biosynthesis; glycine from L-serine: step 1/1. Its function is as follows. Catalyzes the reversible interconversion of serine and glycine with tetrahydrofolate (THF) serving as the one-carbon carrier. This reaction serves as the major source of one-carbon groups required for the biosynthesis of purines, thymidylate, methionine, and other important biomolecules. Also exhibits THF-independent aldolase activity toward beta-hydroxyamino acids, producing glycine and aldehydes, via a retro-aldol mechanism. The sequence is that of Serine hydroxymethyltransferase from Syntrophomonas wolfei subsp. wolfei (strain DSM 2245B / Goettingen).